The chain runs to 99 residues: Large ribosomal subunit protein uL23 (99 aa).

Belongs to the universal ribosomal protein uL23 family. Part of the 50S ribosomal subunit. Contacts protein L29, and trigger factor when it is bound to the ribosome.

Its function is as follows. One of the early assembly proteins it binds 23S rRNA. One of the proteins that surrounds the polypeptide exit tunnel on the outside of the ribosome. Forms the main docking site for trigger factor binding to the ribosome. This chain is Large ribosomal subunit protein uL23, found in Francisella philomiragia subsp. philomiragia (strain ATCC 25017 / CCUG 19701 / FSC 153 / O#319-036).